A 334-amino-acid polypeptide reads, in one-letter code: Aspartate carbamoyltransferase catalytic subunit (334 aa).

Residues Arg71 and Thr72 each coordinate carbamoyl phosphate. Lys99 provides a ligand contact to L-aspartate. Residues Arg121, His151, and Gln154 each coordinate carbamoyl phosphate. Arg184 and Arg239 together coordinate L-aspartate. 2 residues coordinate carbamoyl phosphate: Gly280 and Pro281.

This sequence belongs to the aspartate/ornithine carbamoyltransferase superfamily. ATCase family. As to quaternary structure, heterododecamer (2C3:3R2) of six catalytic PyrB chains organized as two trimers (C3), and six regulatory PyrI chains organized as three dimers (R2).

The enzyme catalyses carbamoyl phosphate + L-aspartate = N-carbamoyl-L-aspartate + phosphate + H(+). The protein operates within pyrimidine metabolism; UMP biosynthesis via de novo pathway; (S)-dihydroorotate from bicarbonate: step 2/3. Functionally, catalyzes the condensation of carbamoyl phosphate and aspartate to form carbamoyl aspartate and inorganic phosphate, the committed step in the de novo pyrimidine nucleotide biosynthesis pathway. The polypeptide is Aspartate carbamoyltransferase catalytic subunit (Pseudomonas syringae pv. syringae (strain B728a)).